Consider the following 404-residue polypeptide: uncharacterized protein (404 aa).

Polar residues predominate over residues 262–278 (VSTGDTSPYGTEDSSPA). Disordered regions lie at residues 262-307 (VSTG…SPSL) and 320-340 (KKSHSANDSEEFFREDDGGAD). Phosphoserine occurs at positions 268, 276, and 279. 2 positions are modified to phosphothreonine: Thr-290 and Thr-293. A phosphoserine mark is found at Ser-304, Ser-306, Ser-324, Ser-358, and Ser-362. Residues 320–336 (KKSHSANDSEEFFREDD) show a composition bias toward basic and acidic residues.

This is an uncharacterized protein from Rattus norvegicus (Rat).